The primary structure comprises 446 residues: Oxysterols receptor LXR-beta (446 aa).

Residues 1 to 28 (MSSPTSSLDTPLPGNGSPQPSTSSTSPT) show a composition bias toward low complexity. The disordered stretch occupies residues 1-69 (MSSPTSSLDT…PERKRKKGPA (69 aa)). Residues 1-76 (MSSPTSSLDT…GPAPKMLGHE (76 aa)) are transactivation AF-1; required for ligand-independent transactivation function. A DNA-binding region (nuclear receptor) is located at residues 75-152 (HELCRVCGDK…AGMREQCVLS (78 aa)). 2 NR C4-type zinc fingers span residues 78 to 98 (CRVC…CEGC) and 116 to 140 (CRGS…LRKC). Residues 160–201 (KIQKQQQQQPPPPTEPASGSSARPAASPGTSEASSQGSGEGE) are disordered. Positions 175–196 (PASGSSARPAASPGTSEASSQG) are enriched in low complexity. A transactivation AF-2; required for ligand-dependent transactivation function; mediates interaction with CCAR2 region spans residues 205-446 (LTAAQELMIQ…LLSEIWDVHE (242 aa)). The NR LBD domain maps to 208–446 (AQELMIQQLV…LLSEIWDVHE (239 aa)). Residues K395 and K433 each participate in a glycyl lysine isopeptide (Lys-Gly) (interchain with G-Cter in SUMO2) cross-link.

Belongs to the nuclear hormone receptor family. NR1 subfamily. Forms a heterodimer with RXR. Interacts with CCAR2 (via N-terminus) in a ligand-independent manner. Interacts (when sumoylated) with GPS2; interaction with GPS2 onto hepatic acute phase protein promoters prevents N-Cor corepressor complex dissociation. Interacts with ABCA12 and ABCA1; this interaction is required for ABCA1 localization to the cell surface and is necessary for its normal activity and stability. In terms of processing, sumoylated by SUMO2 at Lys-395 and Lys-433 during the hepatic acute phase response, leading to promote interaction with GPS2 and prevent N-Cor corepressor complex dissociation.

It is found in the nucleus. Its function is as follows. Nuclear receptor that exhibits a ligand-dependent transcriptional activation activity. Binds preferentially to double-stranded oligonucleotide direct repeats having the consensus half-site sequence 5'-AGGTCA-3' and 4-nt spacing (DR-4). Regulates cholesterol uptake through MYLIP-dependent ubiquitination of LDLR, VLDLR and LRP8; DLDLR and LRP8. Interplays functionally with RORA for the regulation of genes involved in liver metabolism. Induces LPCAT3-dependent phospholipid remodeling in endoplasmic reticulum (ER) membranes of hepatocytes, driving SREBF1 processing and lipogenesis. Via LPCAT3, triggers the incorporation of arachidonate into phosphatidylcholines of ER membranes, increasing membrane dynamics and enabling triacylglycerols transfer to nascent very low-density lipoprotein (VLDL) particles. Via LPCAT3 also counteracts lipid-induced ER stress response and inflammation, likely by modulating SRC kinase membrane compartmentalization and limiting the synthesis of lipid inflammatory mediators. Plays an anti-inflammatory role during the hepatic acute phase response by acting as a corepressor: inhibits the hepatic acute phase response by preventing dissociation of the N-Cor corepressor complex. The sequence is that of Oxysterols receptor LXR-beta (Nr1h2) from Rattus norvegicus (Rat).